The following is a 568-amino-acid chain: MDQDALISKEDSEVEREASGGRESLSDVIGFLDAVLSSEPTDIGGDRSWLHNTINTLQRPGSTHRVKGEGEGEVSTSSTQDNRSGEESRVSGGTSEPEAEAHARNVDKQNIHWATGRGASTDSVPQDLGNGRDSGILEDPPNEGGYPRSGAEDENREMAANPDKRGEDQAEGLPEEIRRSAPLPDEREGRADNNGRGVEPGSPHSARVTGVLVIPSPELEEAVLQRNKRRPANSGSRSLTPVVVPSTRSPPPDHDNSTRSPPRKPPTTQDEHTNPRNTPAVRIKDRRPPTGTRSAPDRPTDGYPTHPSPETDATKKGIEENTSSMKEMATLLTSLGVIQSAQEFESSRDASYVFAKRALKSANYAEMAFNVCGLILSAEKSFANRVDENKQLLKQIQESVESFRDIYKRFSEYQKEQNSLLMSNLSTLHIITDRGGKTDNPDSPTRSPSVFAKTKENKTKATRFDPSMETMGDMRYKPDLLREDEFREEIRNPVYQERDTEPRASNASRLLPSREKPTIHSLKLVIESSPLSRAEKAAYVKSLSKCKTDQEVKAVMELVEEDIESLTN.

Positions 1 to 23 (MDQDALISKEDSEVEREASGGRE) are disordered. Basic and acidic residues predominate over residues 7–20 (ISKEDSEVEREASG). The interval 33–41 (DAVLSSEPT) is N0 binding. The interval 54–317 (INTLQRPGST…SPETDATKKG (264 aa)) is disordered. 3 stretches are compositionally biased toward basic and acidic residues: residues 99–110 (AEAHARNVDKQN), 150–168 (GAED…RGED), and 175–193 (EEIR…RADN). A phosphoserine; by host mark is found at Ser249, Ser257, and Ser260. Positions 344–411 (FESSRDASYV…SFRDIYKRFS (68 aa)) are multimerization. Residues 364–429 (YAEMAFNVCG…LLMSNLSTLH (66 aa)) are a coiled coil. The interval 412-445 (EYQKEQNSLLMSNLSTLHIITDRGGKTDNPDSPT) is l protein binding. Positions 433 to 462 (DRGGKTDNPDSPTRSPSVFAKTKENKTKAT) are disordered. Residues Ser447 and Ser449 each carry the phosphoserine; by host modification. Over residues 453 to 462 (KTKENKTKAT) the composition is skewed to basic and acidic residues. The interval 479 to 568 (DLLREDEFRE…VEEDIESLTN (90 aa)) is interaction with the nucleocapsid (N-RNA).

Belongs to the respirovirus P protein family. As to quaternary structure, homotetramer. Interacts (via multimerization domain) with polymerase L; this interaction forms the polymerase complex. Interacts (via N-terminus) with N0; this interaction allows P to chaperon N0 before encapsidation and form the N-P complex. Interacts (via C-terminus) with N-RNA template; this interaction positions the polymerase on the template. Post-translationally, phosphorylated by PKC/PRKCZ, and other unknown kinases. Phosphorylation is necessary for viral transcription and replication. The N-terminus contains the majority of phosphorylated sites. Ser-249 is the major site of phosphorylation, but is not necessary for most functions.

The protein localises to the host cytoplasm. In terms of biological role, essential cofactor of the RNA polymerase L that plays a central role in the transcription and replication by forming the polymerase complex with RNA polymerase L and recruiting L to the genomic N-RNA template for RNA synthesis. Also plays a central role in the encapsidation of nascent RNA chains by forming the encapsidation complex with the nucleocapsid protein N (N-P complex). Acts as a chaperone for newly synthesized free N protein, so-called N0, allowing encapsidation of nascent RNA chains during replication. The nucleoprotein protein N prevents excessive phosphorylation of P, which leads to down-regulation of viral transcription/ replication. Participates, together with N, in the formation of viral factories (viroplasms), which are large inclusions in the host cytoplasm where replication takes place. Recruits host PI4KB and remodel the host endoplasmic reticulum membrane to form viral replication factories. This chain is Phosphoprotein (P/V/C), found in Sendai virus (strain Ohita) (SeV).